Here is a 462-residue protein sequence, read N- to C-terminus: TNF receptor-associated factor family protein DDB_G0267754 (462 aa).

The RING-type; degenerate zinc-finger motif lies at C24–R62. The disordered stretch occupies residues K104–Q127. 2 TRAF-type zinc fingers span residues S150–E217 and S214–A273. The 124-residue stretch at M326–I449 folds into the MATH domain.

The protein belongs to the TNF receptor-associated factor family. A subfamily.

The protein resides in the cytoplasm. Its function is as follows. Probable adapter protein and signal transducer that links members of the tumor necrosis factor receptor family to different signaling pathways by association with the receptor cytoplasmic domain and kinases. This chain is TNF receptor-associated factor family protein DDB_G0267754, found in Dictyostelium discoideum (Social amoeba).